The following is a 669-amino-acid chain: Galactocerebrosidase (669 aa).

The signal sequence occupies residues 1 to 26 (MTAAAGSAGHAAVPLLLCALLVPGGA). 3 residues coordinate substrate: Thr-93, Trp-135, and Asn-181. Catalysis depends on Glu-182, which acts as the Proton donor/acceptor. Glu-258 serves as the catalytic Nucleophile. Cysteines 271 and 378 form a disulfide. Residue Asn-363 is glycosylated (N-linked (GlcNAc...) asparagine). Substrate is bound at residue Arg-380. N-linked (GlcNAc...) asparagine glycosylation is found at Asn-387, Asn-543, and Asn-586.

The protein belongs to the glycosyl hydrolase 59 family.

The protein localises to the lysosome. The enzyme catalyses a beta-D-galactosyl-(1&lt;-&gt;1')-N-acylsphing-4-enine + H2O = an N-acylsphing-4-enine + D-galactose. It carries out the reaction beta-D-galactosyl-(1&lt;-&gt;1)-sphing-4-enine + H2O = sphing-4-enine + D-galactose. The catalysed reaction is a D-galactosylceramide + H2O = an N-acyl-sphingoid base + D-galactose. Its function is as follows. Hydrolyzes the galactose ester bonds of glycolipids such as galactosylceramide and galactosylsphingosine. Enzyme with very low activity responsible for the lysosomal catabolism of galactosylceramide, a major lipid in myelin, kidney and epithelial cells of small intestine and colon. This is Galactocerebrosidase from Canis lupus familiaris (Dog).